Consider the following 234-residue polypeptide: Carboxymethylenebutenolidase 1 (234 aa).

Active-site residues include Cys123, Asp171, and His201.

The protein belongs to the dienelactone hydrolase family. In terms of assembly, monomer.

The enzyme catalyses 2-(5-oxo-2,5-dihydrofuran-2-ylidene)acetate + H2O = 4-oxohex-2-enedioate + H(+). It participates in aromatic compound metabolism; 3-chlorocatechol degradation. Functionally, ring cleavage of cyclic ester dienelactone to produce maleylacetate. The polypeptide is Carboxymethylenebutenolidase 1 (tfdEI) (Cupriavidus pinatubonensis (strain JMP 134 / LMG 1197) (Cupriavidus necator (strain JMP 134))).